A 124-amino-acid chain; its full sequence is UPF0102 protein Rcas_2007 (124 aa).

Belongs to the UPF0102 family.

The protein is UPF0102 protein Rcas_2007 of Roseiflexus castenholzii (strain DSM 13941 / HLO8).